The following is a 255-amino-acid chain: Thiazole synthase (255 aa).

Lys-97 serves as the catalytic Schiff-base intermediate with DXP. 1-deoxy-D-xylulose 5-phosphate-binding positions include Gly-158, 184–185 (AG), and 206–207 (NT).

The protein belongs to the ThiG family. In terms of assembly, homotetramer. Forms heterodimers with either ThiH or ThiS.

It is found in the cytoplasm. It carries out the reaction [ThiS sulfur-carrier protein]-C-terminal-Gly-aminoethanethioate + 2-iminoacetate + 1-deoxy-D-xylulose 5-phosphate = [ThiS sulfur-carrier protein]-C-terminal Gly-Gly + 2-[(2R,5Z)-2-carboxy-4-methylthiazol-5(2H)-ylidene]ethyl phosphate + 2 H2O + H(+). It participates in cofactor biosynthesis; thiamine diphosphate biosynthesis. Functionally, catalyzes the rearrangement of 1-deoxy-D-xylulose 5-phosphate (DXP) to produce the thiazole phosphate moiety of thiamine. Sulfur is provided by the thiocarboxylate moiety of the carrier protein ThiS. In vitro, sulfur can be provided by H(2)S. This chain is Thiazole synthase, found in Acetivibrio thermocellus (strain ATCC 27405 / DSM 1237 / JCM 9322 / NBRC 103400 / NCIMB 10682 / NRRL B-4536 / VPI 7372) (Clostridium thermocellum).